Consider the following 325-residue polypeptide: Peroxidase 45 (325 aa).

An N-terminal signal peptide occupies residues 1 to 25; the sequence is MEKNTSQTIFSNFFLLLLLSSCVSA. 4 cysteine pairs are disulfide-bonded: C36–C115, C69–C74, C121–C321, and C200–C232. The active-site Proton acceptor is the H67. Ca(2+) contacts are provided by D68, V71, G73, D75, and S77. P163 contributes to the substrate binding site. H193 is a binding site for heme b. T194 contributes to the Ca(2+) binding site. Ca(2+) contacts are provided by D245, S248, and D253.

This sequence belongs to the peroxidase family. Classical plant (class III) peroxidase subfamily. Heme b is required as a cofactor. It depends on Ca(2+) as a cofactor. Slightly expressed in roots.

The protein resides in the secreted. It carries out the reaction 2 a phenolic donor + H2O2 = 2 a phenolic radical donor + 2 H2O. Its function is as follows. Removal of H(2)O(2), oxidation of toxic reductants, biosynthesis and degradation of lignin, suberization, auxin catabolism, response to environmental stresses such as wounding, pathogen attack and oxidative stress. These functions might be dependent on each isozyme/isoform in each plant tissue. The polypeptide is Peroxidase 45 (PER45) (Arabidopsis thaliana (Mouse-ear cress)).